Consider the following 230-residue polypeptide: Sugar fermentation stimulation protein homolog (230 aa).

Belongs to the SfsA family.

This Clostridium botulinum (strain ATCC 19397 / Type A) protein is Sugar fermentation stimulation protein homolog.